The sequence spans 89 residues: Small ribosomal subunit protein uS15 (89 aa).

Belongs to the universal ribosomal protein uS15 family. Part of the 30S ribosomal subunit. Forms a bridge to the 50S subunit in the 70S ribosome, contacting the 23S rRNA.

One of the primary rRNA binding proteins, it binds directly to 16S rRNA where it helps nucleate assembly of the platform of the 30S subunit by binding and bridging several RNA helices of the 16S rRNA. In terms of biological role, forms an intersubunit bridge (bridge B4) with the 23S rRNA of the 50S subunit in the ribosome. This Yersinia enterocolitica serotype O:8 / biotype 1B (strain NCTC 13174 / 8081) protein is Small ribosomal subunit protein uS15.